We begin with the raw amino-acid sequence, 121 residues long: Small ribosomal subunit protein uS13 (121 aa).

The tract at residues 92-121 is disordered; the sequence is HKAGLPVRGQKTHSNARTRKGPRLTKIKKR. Residues 101-121 are compositionally biased toward basic residues; sequence QKTHSNARTRKGPRLTKIKKR.

It belongs to the universal ribosomal protein uS13 family. As to quaternary structure, part of the 30S ribosomal subunit. Forms a loose heterodimer with protein S19. Forms two bridges to the 50S subunit in the 70S ribosome.

Located at the top of the head of the 30S subunit, it contacts several helices of the 16S rRNA. In the 70S ribosome it contacts the 23S rRNA (bridge B1a) and protein L5 of the 50S subunit (bridge B1b), connecting the 2 subunits; these bridges are implicated in subunit movement. Contacts the tRNAs in the A and P-sites. The chain is Small ribosomal subunit protein uS13 from Petrotoga mobilis (strain DSM 10674 / SJ95).